The primary structure comprises 320 residues: Malate dehydrogenase (320 aa).

Residues 10 to 15 (GSGMIG) and Asp34 contribute to the NAD(+) site. Substrate is bound by residues Arg83 and Arg89. NAD(+)-binding positions include Asn96 and 119–121 (ITN). The substrate site is built by Asn121 and Arg152. The Proton acceptor role is filled by His176.

The protein belongs to the LDH/MDH superfamily. MDH type 3 family.

It carries out the reaction (S)-malate + NAD(+) = oxaloacetate + NADH + H(+). Functionally, catalyzes the reversible oxidation of malate to oxaloacetate. The chain is Malate dehydrogenase from Brucella canis (strain ATCC 23365 / NCTC 10854 / RM-666).